Consider the following 299-residue polypeptide: ATP phosphoribosyltransferase (299 aa).

It belongs to the ATP phosphoribosyltransferase family. Long subfamily. As to quaternary structure, equilibrium between an active dimeric form, an inactive hexameric form and higher aggregates. Interconversion between the various forms is largely reversible and is influenced by the natural substrates and inhibitors of the enzyme. Requires Mg(2+) as cofactor.

It localises to the cytoplasm. It catalyses the reaction 1-(5-phospho-beta-D-ribosyl)-ATP + diphosphate = 5-phospho-alpha-D-ribose 1-diphosphate + ATP. It functions in the pathway amino-acid biosynthesis; L-histidine biosynthesis; L-histidine from 5-phospho-alpha-D-ribose 1-diphosphate: step 1/9. Feedback inhibited by histidine. Functionally, catalyzes the condensation of ATP and 5-phosphoribose 1-diphosphate to form N'-(5'-phosphoribosyl)-ATP (PR-ATP). Has a crucial role in the pathway because the rate of histidine biosynthesis seems to be controlled primarily by regulation of HisG enzymatic activity. The sequence is that of ATP phosphoribosyltransferase from Escherichia coli O8 (strain IAI1).